Consider the following 344-residue polypeptide: Membrane progestin receptor delta (344 aa).

Residues 1-51 (MLSLKLPQLLQVHQVPRVFWEDGIMSGYRRPTSSALDCVLSSFQMTNETVN) lie on the Cytoplasmic side of the membrane. A helical membrane pass occupies residues 52-72 (IWTHFLPTWYFLWRLLALAGG). Topologically, residues 73–83 (PGFRAEPYHWP) are extracellular. A helical membrane pass occupies residues 84–104 (LLVFLLPACLYPFASCCAHTF). The Cytoplasmic portion of the chain corresponds to 105–113 (SSMSPRMRH). A helical membrane pass occupies residues 114 to 134 (ICYFLDYGALSLYSLGCAFPY). The Extracellular segment spans residues 135 to 147 (AAYSMPASWLHGH). A helical transmembrane segment spans residues 148–168 (LHQFFVPAAALNSFLCTGLSC). The Cytoplasmic segment spans residues 169–217 (YSRFLELESPGLSKVLRTGAFAYPFLFDNLPLFYRLGLCWGRGHGCGQE). The chain crosses the membrane as a helical span at residues 218-238 (ALSTSHGYHLFCALLTGFLFA). Over 239-258 (SHLPERLAPGRFDYIGHSHQ) the chain is Extracellular. A helical membrane pass occupies residues 259-279 (LFHICAVLGTHFQLEAVLADM). The Cytoplasmic segment spans residues 280–292 (GSRRAWLATQEPA). The helical transmembrane segment at 293–313 (LGLAGTVATLVLAAAGNLLII) threads the bilayer. Over 314-344 (AAFTATLLRAPSTCPLLQGGPLEGGTQAKQQ) the chain is Extracellular.

The protein belongs to the ADIPOR family. As to quaternary structure, homodimer. In terms of tissue distribution, brain specific. Highly expressed in the hypothalamus, also expressed in forebrain, amygdala, corpus callosum and spinal cord.

The protein resides in the cell membrane. Its function is as follows. Plasma membrane progesterone (P4) receptor coupled to G proteins. Seems to act through a G(s) mediated pathway. Involved in neurosteroid inhibition of apoptosis. May be involved in regulating rapid P4 signaling in the nervous system. Also binds dehydroepiandrosterone (DHEA), pregnanolone, pregnenolone and allopregnanolone. The chain is Membrane progestin receptor delta from Homo sapiens (Human).